Consider the following 288-residue polypeptide: Capsid protein (288 aa).

N-acetylalanine; by host is present on A2.

It belongs to the high plain virus capsid family.

The protein resides in the virion. The protein is Capsid protein of High plains virus (isolate Kansas 2004).